Here is an 84-residue protein sequence, read N- to C-terminus: FCGSKPRCRPRCKPRCRSRSKKRCRRCRRRCSRIVKKCCRRRSKCCRRRRRCPCPCPRKKLRCCKRRPKRRCPKRKKKRCRRKC.

2 disulfide bridges follow: Cys16–Cys24 and Cys64–Cys80.

As to quaternary structure, cross-linked by interchain disulfide bonds around the DNA-helix. In terms of tissue distribution, testis.

Its subcellular location is the nucleus. It is found in the chromosome. Protamines substitute for histones in the chromatin of sperm during the haploid phase of spermatogenesis. They compact sperm DNA into a highly condensed, stable and inactive complex. This protamine condenses spermiogenic chromatin in a pattern which comprises fibers with a progressively larger diameter and lamellae that finally undergo definitive coalescence. This chain is Cysteine-rich protamine, found in Eledone cirrhosa (Curled octopus).